The sequence spans 361 residues: Peptide chain release factor 1 (361 aa).

An N5-methylglutamine modification is found at Gln-237.

Belongs to the prokaryotic/mitochondrial release factor family. In terms of processing, methylated by PrmC. Methylation increases the termination efficiency of RF1.

The protein resides in the cytoplasm. Functionally, peptide chain release factor 1 directs the termination of translation in response to the peptide chain termination codons UAG and UAA. The protein is Peptide chain release factor 1 of Alcanivorax borkumensis (strain ATCC 700651 / DSM 11573 / NCIMB 13689 / SK2).